The chain runs to 538 residues: MQLTELSIQSQNPFVRDYINGKKEIEPFFDYGLSNESWSVRLDDLSSRTYDRDALADYLLDYHRKFQSATMNETIERLRDPKSVVVVGGQQAGLLTGPLYTIHKIVSILLLAKQKEQELNVPVIPVFWVAGEDHDLEEINHVYISDGGKVKKHKLPQSHWKKSQAAKTALDAEKAEKWLDGIFASFEETEYTNDLLGHLRRCLRQSLSFTDFFEFLVADMFEQDGLILLNSGDPGIRNLEARFFRQLLDKNDELTDSVKRQQELMKQLGYTPIIEGAAQHANIFYERDGERFLIEKENGAFFIKELHLQWSEAELCDLICQNPEAFSNNVVTRPLMQEYLLPTLAFIAGPGEINYWGELKGAFQVMGYKMPPVVPRLQVTFLERHIEKKLDERGIELRESIEKGARAKKEQYFQDKVPSGFTDSVKQAKEKIENIHSAVRAEALEIDGSLGPLLEKNAGFIQDQLQFLEKTVIRRIEEKENYILRDFDKIQTSIKPLDAPQERIWNIVYYLNKYGPDFLEKYKDLPYSFQNMHQVVKL.

A coiled-coil region spans residues 454-482; the sequence is LEKNAGFIQDQLQFLEKTVIRRIEEKENY.

This sequence belongs to the BshC family.

Involved in bacillithiol (BSH) biosynthesis. May catalyze the last step of the pathway, the addition of cysteine to glucosamine malate (GlcN-Mal) to generate BSH. The sequence is that of Putative cysteine ligase BshC from Bacillus licheniformis (strain ATCC 14580 / DSM 13 / JCM 2505 / CCUG 7422 / NBRC 12200 / NCIMB 9375 / NCTC 10341 / NRRL NRS-1264 / Gibson 46).